The sequence spans 501 residues: Aldehyde dehydrogenase mpl4 (501 aa).

Residue 231–236 (GSTASG) participates in NAD(+) binding. Catalysis depends on residues E253 and C287.

It belongs to the aldehyde dehydrogenase family.

The catalysed reaction is an aldehyde + NAD(+) + H2O = a carboxylate + NADH + 2 H(+). It functions in the pathway mycotoxin biosynthesis. Its function is as follows. Aldehyde dehydrogenase; part of the gene cluster that mediates the biosynthesis of the mycotoxin citrinin, a hepato-nephrotoxic compound to humans due to inhibition of respiration complex III. The pathway begins with the synthesis of a keto-aldehyde intermediate by the citrinin PKS (pksCT) from successive condensations of 4 malonyl-CoA units, presumably with a simple acetyl-CoA starter unit. Release of the keto-aldehyde intermediate is consistent with the presence of the C-terminal reductive release domain. Mp11 collaborates with pksCT by catalyzing the hydrolysis of ACP-bound acyl intermediates to free the ACP from stalled intermediates. Mpl2 then catalyzes the oxidation of the C-12 methyl of the ketone intermediate to an alcohol intermediate which is further oxidized by the oxidoreductase mpl7 to produce a bisaldehyde intermediate. The fourth catalytic step is catalyzed by the mpl4 aldehyde dehydrogenase. The final transformation is the reduction of C-3 by mpl6 to provide the chemically stable citrinin nucleus. The sequence is that of Aldehyde dehydrogenase mpl4 from Monascus purpureus (Red mold).